We begin with the raw amino-acid sequence, 62 residues long: uncharacterized protein (62 aa).

Residues 1–19 (MKLIILLFVVAAFVTLAMG) form the signal peptide.

This is an uncharacterized protein from Lepidoptera (butterflies and moths).